A 475-amino-acid chain; its full sequence is Argininosuccinate lyase (475 aa).

The protein belongs to the lyase 1 family. Argininosuccinate lyase subfamily.

It localises to the cytoplasm. The enzyme catalyses 2-(N(omega)-L-arginino)succinate = fumarate + L-arginine. Its pathway is amino-acid biosynthesis; L-arginine biosynthesis; L-arginine from L-ornithine and carbamoyl phosphate: step 3/3. The polypeptide is Argininosuccinate lyase (Streptomyces griseus subsp. griseus (strain JCM 4626 / CBS 651.72 / NBRC 13350 / KCC S-0626 / ISP 5235)).